Here is a 320-residue protein sequence, read N- to C-terminus: MDGDELTEQETALYDRQIRVWGAGAQRRLSKSHVLVSGIKGTVAEFCKNIVLAGVGSVTLLDDRLVTTEVFNANFLILPDENAYVGKTVAEICCDSLKDFNPMVHVSIEKGDLSTLGVDFFEKFDVVVIGYSSRATKKAVNEKCRNLAKDVAFYTVDCRGSCGEIFVDLQNYKYTKKKLDETVECELTFPSFEEAVSVPWKPMPRRTAKLYFAMRVIELFEETEGRKPGECSLSDLPRVLKLKKELCEGNSVSENHIPDILLERLVSNNTEFPPACAIIGGILGQEVIKVISGKGEPLKNFFYFDAEDGKGVIEDLSHKL.

Methionine 1 bears the N-acetylmethionine mark.

It belongs to the ubiquitin-activating E1 family. In terms of assembly, heterodimer of SAE1A or SAE1B and SAE2. The complex binds SUMO proteins via SAE2.

It localises to the nucleus. Its pathway is protein modification; protein sumoylation. Its function is as follows. The dimeric enzyme acts as an E1 ligase for SUMO1 and SUMO2. It mediates ATP-dependent activation of SUMO proteins and formation of a thioester with a conserved cysteine residue on SAE2. Functionally redundant with its paralog SAE1A. The protein is SUMO-activating enzyme subunit 1B-1 (SAE1B-1) of Arabidopsis thaliana (Mouse-ear cress).